A 306-amino-acid chain; its full sequence is Ribokinase (306 aa).

Substrate-binding positions include 12 to 14, 40 to 44, and Glu141; these read NAD and GKGAN. Residues Asn185 and 221–226 each bind ATP; that span reads TLGAKG. Asp247 and Thr249 together coordinate K(+). 252–253 is a binding site for ATP; it reads GD. Asp253 provides a ligand contact to substrate. Asp253 (proton acceptor) is an active-site residue. Residues Ser283, Lys286, Gly288, and Ser292 each coordinate K(+).

It belongs to the carbohydrate kinase PfkB family. Ribokinase subfamily. Homodimer. It depends on Mg(2+) as a cofactor.

The protein resides in the cytoplasm. It carries out the reaction D-ribose + ATP = D-ribose 5-phosphate + ADP + H(+). Its pathway is carbohydrate metabolism; D-ribose degradation; D-ribose 5-phosphate from beta-D-ribopyranose: step 2/2. With respect to regulation, activated by a monovalent cation that binds near, but not in, the active site. The most likely occupant of the site in vivo is potassium. Ion binding induces a conformational change that may alter substrate affinity. Its function is as follows. Catalyzes the phosphorylation of ribose at O-5 in a reaction requiring ATP and magnesium. The resulting D-ribose-5-phosphate can then be used either for sythesis of nucleotides, histidine, and tryptophan, or as a component of the pentose phosphate pathway. The chain is Ribokinase from Haemophilus influenzae (strain ATCC 51907 / DSM 11121 / KW20 / Rd).